Here is a 149-residue protein sequence, read N- to C-terminus: Arginine repressor (149 aa).

It belongs to the ArgR family.

Its subcellular location is the cytoplasm. It participates in amino-acid biosynthesis; L-arginine biosynthesis [regulation]. Its function is as follows. Regulates arginine biosynthesis genes. This is Arginine repressor from Oceanobacillus iheyensis (strain DSM 14371 / CIP 107618 / JCM 11309 / KCTC 3954 / HTE831).